The following is a 555-amino-acid chain: Potassium-transporting ATPase potassium-binding subunit (555 aa).

Transmembrane regions (helical) follow at residues Ile2 to Ile22, Gln60 to Phe80, Ile130 to Phe150, Val173 to Thr193, Met246 to Tyr266, Ile278 to Glu298, Ala374 to Val394, Leu412 to Leu432, Leu483 to Leu503, and Gly525 to Leu545.

This sequence belongs to the KdpA family. As to quaternary structure, the system is composed of three essential subunits: KdpA, KdpB and KdpC.

It localises to the cell membrane. Its function is as follows. Part of the high-affinity ATP-driven potassium transport (or Kdp) system, which catalyzes the hydrolysis of ATP coupled with the electrogenic transport of potassium into the cytoplasm. This subunit binds the extracellular potassium ions and delivers the ions to the membrane domain of KdpB through an intramembrane tunnel. The sequence is that of Potassium-transporting ATPase potassium-binding subunit from Bacillus cereus (strain AH820).